A 164-amino-acid chain; its full sequence is Thiol peroxidase (164 aa).

The Thioredoxin domain occupies Val18–Asn163. Cys60 serves as the catalytic Cysteine sulfenic acid (-SOH) intermediate. A disulfide bridge connects residues Cys60 and Cys93.

Belongs to the peroxiredoxin family. Tpx subfamily. Homodimer.

The catalysed reaction is a hydroperoxide + [thioredoxin]-dithiol = an alcohol + [thioredoxin]-disulfide + H2O. Functionally, thiol-specific peroxidase that catalyzes the reduction of hydrogen peroxide and organic hydroperoxides to water and alcohols, respectively. Plays a role in cell protection against oxidative stress by detoxifying peroxides. This chain is Thiol peroxidase, found in Staphylococcus haemolyticus (strain JCSC1435).